A 477-amino-acid polypeptide reads, in one-letter code: Diphthine methyltransferase (477 aa).

WD repeat units lie at residues 194 to 232, 236 to 276, and 422 to 464; these read HFEA…TPVF, RHCM…QPLA, and VKTR…ARTL.

Belongs to the DPH7 family. In terms of assembly, interacts with INCA1.

It catalyses the reaction diphthine methyl ester-[translation elongation factor 2] + H2O = diphthine-[translation elongation factor 2] + methanol + H(+). It participates in protein modification; peptidyl-diphthamide biosynthesis. Catalyzes the demethylation of diphthine methyl ester to form diphthine, an intermediate diphthamide biosynthesis, a post-translational modification of histidine which occurs in translation elongation factor 2 (EEF2). The protein is Diphthine methyltransferase (Dph7) of Mus musculus (Mouse).